A 300-amino-acid chain; its full sequence is F-box/LRR-repeat protein 15 (300 aa).

N-acetylmethionine is present on M1. The region spanning 19–66 (LLDLPWEDVLLPHVLNWVPLRQLLRLQRVSRAFRALVQLHLARLRRFD) is the F-box domain. The interval 113 to 269 (NPQLRSVALA…EPSLSRLRKR (157 aa)) is interaction with SMURF1. LRR repeat units follow at residues 141–162 (RLQR…RGLA), 167–188 (ALEE…VYLA), 194–215 (GLRS…QELA), 220–241 (QLEH…RTLA), and 246–267 (ALRS…SRLR).

It belongs to the FBXL15 family. In terms of assembly, part of the SCF (SKP1-CUL1-F-box) E3 ubiquitin-protein ligase complex SCF(FBXL15) composed of CUL1, SKP1, RBX1 and FBXL15. As to expression, expressed in heart, liver, spleen, bone, muscle, brain and kidney (at protein level).

The protein resides in the cytoplasm. It functions in the pathway protein modification; protein ubiquitination. Functionally, substrate recognition component of a SCF (SKP1-CUL1-F-box protein) E3 ubiquitin-protein ligase complex which mediates the ubiquitination and subsequent proteasomal degradation of SMURF1, thereby acting as a positive regulator of the BMP signaling pathway. Required for dorsal/ventral pattern formation and bone mass maintenance. Also mediates ubiquitination of SMURF2 and WWP2. This is F-box/LRR-repeat protein 15 (Fbxl15) from Mus musculus (Mouse).